Reading from the N-terminus, the 119-residue chain is NADH-quinone oxidoreductase subunit A (119 aa).

The next 3 helical transmembrane spans lie at 9–29 (VLLF…LGYV), 63–83 (LVAI…PWAV), and 88–108 (VGMT…VGFA).

Belongs to the complex I subunit 3 family. NDH-1 is composed of 14 different subunits. Subunits NuoA, H, J, K, L, M, N constitute the membrane sector of the complex.

Its subcellular location is the cell inner membrane. The catalysed reaction is a quinone + NADH + 5 H(+)(in) = a quinol + NAD(+) + 4 H(+)(out). Its function is as follows. NDH-1 shuttles electrons from NADH, via FMN and iron-sulfur (Fe-S) centers, to quinones in the respiratory chain. The immediate electron acceptor for the enzyme in this species is believed to be ubiquinone. Couples the redox reaction to proton translocation (for every two electrons transferred, four hydrogen ions are translocated across the cytoplasmic membrane), and thus conserves the redox energy in a proton gradient. In Paracidovorax citrulli (strain AAC00-1) (Acidovorax citrulli), this protein is NADH-quinone oxidoreductase subunit A.